Here is a 329-residue protein sequence, read N- to C-terminus: GTP 3',8-cyclase (329 aa).

One can recognise a Radical SAM core domain in the interval 8 to 234 (AFARKFYYLR…QLRQRSDGPA (227 aa)). Arg17 serves as a coordination point for GTP. Positions 24 and 28 each coordinate [4Fe-4S] cluster. Tyr30 is a binding site for S-adenosyl-L-methionine. Cys31 is a binding site for [4Fe-4S] cluster. A GTP-binding site is contributed by Arg68. Gly72 is a binding site for S-adenosyl-L-methionine. Thr99 is a GTP binding site. Ser123 contacts S-adenosyl-L-methionine. Lys160 is a binding site for GTP. Met194 is an S-adenosyl-L-methionine binding site. Positions 257 and 260 each coordinate [4Fe-4S] cluster. 262 to 264 (RLR) lines the GTP pocket. Residue Cys274 participates in [4Fe-4S] cluster binding.

The protein belongs to the radical SAM superfamily. MoaA family. As to quaternary structure, monomer and homodimer. [4Fe-4S] cluster is required as a cofactor.

It catalyses the reaction GTP + AH2 + S-adenosyl-L-methionine = (8S)-3',8-cyclo-7,8-dihydroguanosine 5'-triphosphate + 5'-deoxyadenosine + L-methionine + A + H(+). It participates in cofactor biosynthesis; molybdopterin biosynthesis. Catalyzes the cyclization of GTP to (8S)-3',8-cyclo-7,8-dihydroguanosine 5'-triphosphate. The polypeptide is GTP 3',8-cyclase (Salmonella paratyphi B (strain ATCC BAA-1250 / SPB7)).